Consider the following 130-residue polypeptide: Small ribosomal subunit protein uS9 (130 aa).

Positions leucine 98 to arginine 130 are disordered. Positions lysine 111 to arginine 130 are enriched in basic residues.

It belongs to the universal ribosomal protein uS9 family.

In Staphylococcus saprophyticus subsp. saprophyticus (strain ATCC 15305 / DSM 20229 / NCIMB 8711 / NCTC 7292 / S-41), this protein is Small ribosomal subunit protein uS9.